A 301-amino-acid chain; its full sequence is ATP synthase F(0) complex subunit B1, mitochondrial (301 aa).

Residues 1–21 (MSLSRLSSPQTFSRVFIVARG) constitute a mitochondrion transit peptide.

This sequence belongs to the eukaryotic ATPase B chain family. Subunit of the F-type ATPase which has 2 components, CF(1) - the catalytic core - and CF(0) - the membrane proton channel.

It localises to the mitochondrion. The protein localises to the mitochondrion inner membrane. Its function is as follows. Mitochondrial membrane ATP synthase (F(1)F(0) ATP synthase or Complex V) produces ATP from ADP in the presence of a proton gradient across the membrane which is generated by electron transport complexes of the respiratory chain. F-type ATPases consist of two structural domains, F(1) - containing the extramembraneous catalytic core, and F(0) - containing the membrane proton channel, linked together by a central stalk and a peripheral stalk. During catalysis, ATP synthesis in the catalytic domain of F(1) is coupled via a rotary mechanism of the central stalk subunits to proton translocation. Part of the complex F(0) domain and the peripheric stalk, which acts as a stator to hold the subunits of the catalytic subcomplexes relative to the rotary elements. Plays a role in germline development. The chain is ATP synthase F(0) complex subunit B1, mitochondrial from Caenorhabditis elegans.